The primary structure comprises 184 residues: Transmembrane protein 140 (184 aa).

Residues Met-1 to Ser-12 lie on the Cytoplasmic side of the membrane. A helical membrane pass occupies residues Phe-13–Trp-33. Over Lys-34–Arg-83 the chain is Extracellular. Residue Asn-37 is glycosylated (N-linked (GlcNAc...) asparagine). A helical membrane pass occupies residues Leu-84–Gln-104. Topologically, residues Cys-105 to Gly-117 are cytoplasmic. A helical membrane pass occupies residues Phe-118 to Trp-138. Over Lys-139–Gly-149 the chain is Extracellular. A helical transmembrane segment spans residues Phe-150–Phe-170. Residues Pro-171–Cys-184 lie on the Cytoplasmic side of the membrane.

Its subcellular location is the membrane. The polypeptide is Transmembrane protein 140 (Tmem140) (Rattus norvegicus (Rat)).